The sequence spans 385 residues: Succinate--CoA ligase [ADP-forming] subunit beta (385 aa).

In terms of domain architecture, ATP-grasp spans Lys-9–Arg-244. ATP-binding positions include Lys-46, Gly-53 to Gly-55, Glu-99, Cys-102, and Glu-107. Mg(2+)-binding residues include Asn-199 and Asp-213. Substrate-binding positions include Asn-264 and Gly-321 to Met-323.

Belongs to the succinate/malate CoA ligase beta subunit family. Heterotetramer of two alpha and two beta subunits. Mg(2+) is required as a cofactor.

It catalyses the reaction succinate + ATP + CoA = succinyl-CoA + ADP + phosphate. It carries out the reaction GTP + succinate + CoA = succinyl-CoA + GDP + phosphate. It functions in the pathway carbohydrate metabolism; tricarboxylic acid cycle; succinate from succinyl-CoA (ligase route): step 1/1. Functionally, succinyl-CoA synthetase functions in the citric acid cycle (TCA), coupling the hydrolysis of succinyl-CoA to the synthesis of either ATP or GTP and thus represents the only step of substrate-level phosphorylation in the TCA. The beta subunit provides nucleotide specificity of the enzyme and binds the substrate succinate, while the binding sites for coenzyme A and phosphate are found in the alpha subunit. This is Succinate--CoA ligase [ADP-forming] subunit beta from Rickettsia bellii (strain OSU 85-389).